Here is a 433-residue protein sequence, read N- to C-terminus: Dihydroorotase (433 aa).

Residues H63 and H65 each coordinate Zn(2+). Substrate-binding positions include 65-67 and N97; that span reads HLR. Zn(2+) is bound by residues D155, H182, and H235. N283 contacts substrate. Residue D310 coordinates Zn(2+). D310 is a catalytic residue. H314 lines the substrate pocket.

It belongs to the metallo-dependent hydrolases superfamily. DHOase family. Class I DHOase subfamily. Zn(2+) serves as cofactor.

It carries out the reaction (S)-dihydroorotate + H2O = N-carbamoyl-L-aspartate + H(+). The protein operates within pyrimidine metabolism; UMP biosynthesis via de novo pathway; (S)-dihydroorotate from bicarbonate: step 3/3. Functionally, catalyzes the reversible cyclization of carbamoyl aspartate to dihydroorotate. This is Dihydroorotase from Anaeromyxobacter sp. (strain K).